Reading from the N-terminus, the 417-residue chain is Tyrosine--tRNA ligase (417 aa).

Position 34 (tyrosine 34) interacts with L-tyrosine. The 'HIGH' region signature appears at 39 to 48 (PSGDSLHIGH). The L-tyrosine site is built by tyrosine 165 and glutamine 169. The short motif at 227–231 (KFGKT) is the 'KMSKS' region element. Lysine 230 provides a ligand contact to ATP. An S4 RNA-binding domain is found at 349–415 (ANIVDWLVDT…GKKNYTLAKV (67 aa)).

This sequence belongs to the class-I aminoacyl-tRNA synthetase family. TyrS type 1 subfamily. As to quaternary structure, homodimer.

It is found in the cytoplasm. The enzyme catalyses tRNA(Tyr) + L-tyrosine + ATP = L-tyrosyl-tRNA(Tyr) + AMP + diphosphate + H(+). In terms of biological role, catalyzes the attachment of tyrosine to tRNA(Tyr) in a two-step reaction: tyrosine is first activated by ATP to form Tyr-AMP and then transferred to the acceptor end of tRNA(Tyr). This chain is Tyrosine--tRNA ligase, found in Limosilactobacillus fermentum (strain NBRC 3956 / LMG 18251) (Lactobacillus fermentum).